The chain runs to 278 residues: Undecaprenyl-diphosphatase 3 (278 aa).

Helical transmembrane passes span 42–62 (DITA…LLYF), 88–108 (YRFG…GVAF), 119–139 (LWFV…ADHV), 187–207 (VAVT…AAAL), 224–244 (ATII…AWLL), and 254–274 (VFIG…ATGI).

It belongs to the UppP family.

The protein localises to the cell membrane. The catalysed reaction is di-trans,octa-cis-undecaprenyl diphosphate + H2O = di-trans,octa-cis-undecaprenyl phosphate + phosphate + H(+). Catalyzes the dephosphorylation of undecaprenyl diphosphate (UPP). Confers resistance to bacitracin. This chain is Undecaprenyl-diphosphatase 3, found in Frankia casuarinae (strain DSM 45818 / CECT 9043 / HFP020203 / CcI3).